The chain runs to 123 residues: Large ribosomal subunit protein bL12 (123 aa).

This sequence belongs to the bacterial ribosomal protein bL12 family. As to quaternary structure, homodimer. Part of the ribosomal stalk of the 50S ribosomal subunit. Forms a multimeric L10(L12)X complex, where L10 forms an elongated spine to which 2 to 4 L12 dimers bind in a sequential fashion. Binds GTP-bound translation factors.

In terms of biological role, forms part of the ribosomal stalk which helps the ribosome interact with GTP-bound translation factors. Is thus essential for accurate translation. In Marinomonas sp. (strain MWYL1), this protein is Large ribosomal subunit protein bL12.